The chain runs to 488 residues: DNA polymerase II small subunit (488 aa).

It belongs to the DNA polymerase delta/II small subunit family. As to quaternary structure, heterodimer of a large subunit and a small subunit.

The enzyme catalyses DNA(n) + a 2'-deoxyribonucleoside 5'-triphosphate = DNA(n+1) + diphosphate. It carries out the reaction Exonucleolytic cleavage in the 3'- to 5'-direction to yield nucleoside 5'-phosphates.. Possesses two activities: a DNA synthesis (polymerase) and an exonucleolytic activity that degrades single-stranded DNA in the 3' to 5' direction. Has a template-primer preference which is characteristic of a replicative DNA polymerase. The chain is DNA polymerase II small subunit (polB) from Thermoplasma acidophilum (strain ATCC 25905 / DSM 1728 / JCM 9062 / NBRC 15155 / AMRC-C165).